The following is a 784-amino-acid chain: Endonuclease MutS2 (784 aa).

335–342 (GPNTGGKT) contributes to the ATP binding site. Residues 709 to 784 (LDLRGERYED…GTGVTIVELK (76 aa)) form the Smr domain.

The protein belongs to the DNA mismatch repair MutS family. MutS2 subfamily. As to quaternary structure, homodimer. Binds to stalled ribosomes, contacting rRNA.

Functionally, endonuclease that is involved in the suppression of homologous recombination and thus may have a key role in the control of bacterial genetic diversity. In terms of biological role, acts as a ribosome collision sensor, splitting the ribosome into its 2 subunits. Detects stalled/collided 70S ribosomes which it binds and splits by an ATP-hydrolysis driven conformational change. Acts upstream of the ribosome quality control system (RQC), a ribosome-associated complex that mediates the extraction of incompletely synthesized nascent chains from stalled ribosomes and their subsequent degradation. Probably generates substrates for RQC. The chain is Endonuclease MutS2 from Geobacillus sp. (strain WCH70).